The chain runs to 158 residues: Cytochrome b562 (158 aa).

Transmembrane regions (helical) follow at residues I12–M32, A46–V66, V87–M107, and H121–F141. Residues H15 and H53 each coordinate heme b. The heme b site is built by H121 and H135.

It belongs to the cytochrome b561 family. Homodimer. The cofactor is heme b.

The protein resides in the cell membrane. Its function is as follows. Cytochrome b562 is an integral component of the cytochrome b-c1 complex in the cyclic electron transfer system of photosynthetic bacteria. This Cereibacter sphaeroides (strain ATCC 17023 / DSM 158 / JCM 6121 / CCUG 31486 / LMG 2827 / NBRC 12203 / NCIMB 8253 / ATH 2.4.1.) (Rhodobacter sphaeroides) protein is Cytochrome b562.